We begin with the raw amino-acid sequence, 496 residues long: Cytochrome f, chloroplastic (496 aa).

Residues 1–149 (MASLQTPVMV…VGAAAGSANA (149 aa)) constitute a chloroplast transit peptide. Positions 150, 170, 173, and 174 each coordinate heme. Residues 462 to 481 (VQAFLFFSFTVLATQTLLVV) form a helical membrane-spanning segment.

It belongs to the cytochrome f family. In terms of assembly, interacts with plastocyanin and Rieske iron-sulfur protein. Requires heme as cofactor.

It localises to the plastid. The protein localises to the chloroplast thylakoid membrane. Its function is as follows. Translocates protons across the thylakoid membrane and transfers electrons from photosystem II to photosystem I. It receives electrons from the Rieske iron-sulfur protein and passes them to plastocyanin. The polypeptide is Cytochrome f, chloroplastic (petA) (Euglena gracilis).